Here is a 321-residue protein sequence, read N- to C-terminus: Reticulon-2 (321 aa).

2 disordered regions span residues 1–36 (MGHVLSFTHCKDAPSTASSTPDSCPPEGEEDDSPVT) and 65–85 (PPVRARRGLGQSRVHAAPREE). Residues 134-321 (VKDLLYWRDI…TVKKPPAKQK (188 aa)) enclose the Reticulon domain. A run of 2 helical transmembrane segments spans residues 163–183 (FSVISVFAYGCLIILSVTLTL) and 250–270 (FLVIIYLLTYVGAVFNGITVL).

Its subcellular location is the endoplasmic reticulum membrane. The protein resides in the sarcoplasmic reticulum membrane. The protein localises to the cell membrane. It is found in the sarcolemma. It localises to the T-tubule. Its subcellular location is the cytoplasm. The protein resides in the myofibril. The protein localises to the sarcomere. It is found in the z line. It localises to the cytoskeleton. In terms of biological role, inhibits amyloid precursor protein processing, probably by blocking BACE1 activity. Enhances trafficking of the glutamate transporter SLC1A1/EAAC1 from the endoplasmic reticulum to the cell surface. Plays a role in the translocation of SLC2A4/GLUT4 from intracellular membranes to the cell membrane which facilitates the uptake of glucose into the cell. This Xenopus tropicalis (Western clawed frog) protein is Reticulon-2.